The following is a 406-amino-acid chain: Biofilm regulatory protein A (406 aa).

An N-terminal signal peptide occupies residues 1-26 (MKIGKKILIMLVTIFLTSLVALGVYA). The span at 347-397 (SSSASDYSSSGNYSGSSSDYGSSSSYGSNSSSGSSSDYSGQNSYNQGNYQQ) shows a compositional bias: low complexity. The interval 347–406 (SSSASDYSSSGNYSGSSSDYGSSSSYGSNSSSGSSSDYSGQNSYNQGNYQQPAAGTGIGN) is disordered.

It belongs to the LytR/CpsA/Psr (LCP) family.

The protein resides in the cell envelope. Functionally, involved in biofilm formation, cell division, autolysis and the regulation of acid and oxidative stress tolerance. May be associated with systemic virulence in blood. This is Biofilm regulatory protein A (brpA) from Streptococcus mutans serotype c (strain ATCC 700610 / UA159).